Consider the following 164-residue polypeptide: Interleukin-10 (164 aa).

The N-terminal stretch at 1–18 (MPSSALLCCLIFLARVAA) is a signal peptide. Intrachain disulfides connect Cys-30–Cys-126 and Cys-80–Cys-132. A glycan (N-linked (GlcNAc...) asparagine) is linked at Asn-134.

The protein belongs to the IL-10 family. As to quaternary structure, homodimer. Interacts with IL10RA and IL10RB.

The protein localises to the secreted. In terms of biological role, major immune regulatory cytokine that acts on many cells of the immune system where it has profound anti-inflammatory functions, limiting excessive tissue disruption caused by inflammation. Mechanistically, IL10 binds to its heterotetrameric receptor comprising IL10RA and IL10RB leading to JAK1 and STAT2-mediated phosphorylation of STAT3. In turn, STAT3 translocates to the nucleus where it drives expression of anti-inflammatory mediators. Targets antigen-presenting cells (APCs) such as macrophages and monocytes and inhibits their release of pro-inflammatory cytokines including granulocyte-macrophage colony-stimulating factor /GM-CSF, granulocyte colony-stimulating factor/G-CSF, IL-1 alpha, IL-1 beta, IL-6, IL-8 and TNF-alpha. Also interferes with antigen presentation by reducing the expression of MHC-class II and co-stimulatory molecules, thereby inhibiting their ability to induce T cell activation. In addition, controls the inflammatory response of macrophages by reprogramming essential metabolic pathways including mTOR signaling. The sequence is that of Interleukin-10 (IL10) from Orcinus orca (Killer whale).